A 273-amino-acid chain; its full sequence is 4-hydroxy-tetrahydrodipicolinate reductase (273 aa).

NAD(+)-binding positions include 12 to 17 (GAGGRM) and glutamate 38. Arginine 39 serves as a coordination point for NADP(+). Residues 102 to 104 (GTT) and 126 to 129 (AANF) each bind NAD(+). Residue histidine 159 is the Proton donor/acceptor of the active site. A (S)-2,3,4,5-tetrahydrodipicolinate-binding site is contributed by histidine 160. Lysine 163 acts as the Proton donor in catalysis. 169–170 (GT) provides a ligand contact to (S)-2,3,4,5-tetrahydrodipicolinate.

The protein belongs to the DapB family. In terms of assembly, homotetramer.

The protein localises to the cytoplasm. The catalysed reaction is (S)-2,3,4,5-tetrahydrodipicolinate + NAD(+) + H2O = (2S,4S)-4-hydroxy-2,3,4,5-tetrahydrodipicolinate + NADH + H(+). The enzyme catalyses (S)-2,3,4,5-tetrahydrodipicolinate + NADP(+) + H2O = (2S,4S)-4-hydroxy-2,3,4,5-tetrahydrodipicolinate + NADPH + H(+). The protein operates within amino-acid biosynthesis; L-lysine biosynthesis via DAP pathway; (S)-tetrahydrodipicolinate from L-aspartate: step 4/4. Functionally, catalyzes the conversion of 4-hydroxy-tetrahydrodipicolinate (HTPA) to tetrahydrodipicolinate. The sequence is that of 4-hydroxy-tetrahydrodipicolinate reductase from Salmonella arizonae (strain ATCC BAA-731 / CDC346-86 / RSK2980).